Here is a 116-residue protein sequence, read N- to C-terminus: Small ribosomal subunit protein bS18c (116 aa).

The span at 1–13 (MKPSFRNTSPSFR) shows a compositional bias: polar residues. The tract at residues 1–51 (MKPSFRNTSPSFRNRSKPYFRNRSKPYFRNRSKPSFRNTSKRFSPNQQSFR) is disordered. Residues 14–34 (NRSKPYFRNRSKPYFRNRSKP) show a composition bias toward basic residues. Positions 35–49 (SFRNTSKRFSPNQQS) are enriched in polar residues.

This sequence belongs to the bacterial ribosomal protein bS18 family. In terms of assembly, part of the 30S ribosomal subunit.

It is found in the plastid. The protein resides in the chloroplast. In Cryptomeria japonica (Japanese cedar), this protein is Small ribosomal subunit protein bS18c.